The sequence spans 471 residues: Mannose-1-phosphate guanylyltransferase (471 aa).

This sequence belongs to the mannose-6-phosphate isomerase type 2 family.

It carries out the reaction alpha-D-mannose 1-phosphate + GTP + H(+) = GDP-alpha-D-mannose + diphosphate. It functions in the pathway nucleotide-sugar biosynthesis; GDP-alpha-D-mannose biosynthesis; GDP-alpha-D-mannose from alpha-D-mannose 1-phosphate (GTP route): step 1/1. It participates in bacterial outer membrane biogenesis; LPS O-antigen biosynthesis. In terms of biological role, involved in GDP-mannose biosynthesis which serves as the activated sugar nucleotide precursor for mannose residues in cell surface polysaccharides. This enzyme participates in synthesis of the LPS O9 antigen. In Escherichia coli, this protein is Mannose-1-phosphate guanylyltransferase (manC).